Consider the following 135-residue polypeptide: S-protein homolog 7 (135 aa).

An N-terminal signal peptide occupies residues 1-20 (MNNLFVLVIIIVLSAGSNNG).

It belongs to the plant self-incompatibility (S1) protein family.

The protein resides in the secreted. The sequence is that of S-protein homolog 7 from Arabidopsis thaliana (Mouse-ear cress).